A 730-amino-acid polypeptide reads, in one-letter code: Zinc finger protein 615 (730 aa).

Residues 7–78 (LTLEDVAVDF…EDEIYSRICF (72 aa)) enclose the KRAB domain. 19 consecutive C2H2-type zinc fingers follow at residues 203-225 (HVCSECGKAFLKLSQFIDHQRVH), 231-253 (HVCSMCGKAFSRKSRLMDHQRTH), 259-281 (YECTECDKTFLKKSQLNIHQKTH), 287-309 (YTCSECGKAFIKKCRLIYHQRTH), 315-337 (HGCSVCGKAFSTKFSLTTHQKTH), 343-365 (YICSECGKGFIEKRRLIAHHRTH), 371-393 (FICNKCGKGFTLKNSLITHQQTH), 399-421 (YTCSECGKGFSMKHCLMVHQRTH), 427-449 (YKCNECGKGFALKSPLIRHQRTH), 455-477 (YVCTECRKGFTMKSDLIVHQRTH), 483-505 (YICNDCGKGFTVKSRLIVHQRTH), 511-533 (YVCGECGKGFPAKIRLMGHQRTH), 539-561 (YICDECGKGFTEKSHLNVHRRTH), 567-589 (YVCSECGKGLTGKSMLIAHQRTH), 595-617 (YICNECGKGFTMKSTLSIHQQTH), 623-645 (YKCNECDKSFRKKTCLIQHQRFH), 651-673 (FACTECGKFSLRKNDLITHQRIH), 679-701 (YKCSDCGKAFTTKSGLNVHQRKH), and 707-729 (YGCSDCGKAFAHLSILVKHKRIH).

This sequence belongs to the krueppel C2H2-type zinc-finger protein family.

The protein resides in the nucleus. May be involved in transcriptional regulation. In Pongo abelii (Sumatran orangutan), this protein is Zinc finger protein 615 (ZNF615).